Here is a 444-residue protein sequence, read N- to C-terminus: Phosphoglucosamine mutase (444 aa).

S102 functions as the Phosphoserine intermediate in the catalytic mechanism. Mg(2+) is bound by residues S102, D241, D243, and D245. S102 carries the post-translational modification Phosphoserine.

Belongs to the phosphohexose mutase family. It depends on Mg(2+) as a cofactor. Activated by phosphorylation.

The enzyme catalyses alpha-D-glucosamine 1-phosphate = D-glucosamine 6-phosphate. Catalyzes the conversion of glucosamine-6-phosphate to glucosamine-1-phosphate. This is Phosphoglucosamine mutase from Actinobacillus pleuropneumoniae serotype 5b (strain L20).